The primary structure comprises 1271 residues: Breakpoint cluster region protein (1271 aa).

M1 carries the N-acetylmethionine modification. A kinase region spans residues M1–A426. Positions V28 to R55 form a coiled coil. Residues K67–E173 are disordered. Residues A87–A105 are compositionally biased toward low complexity. S122 is subject to Phosphoserine. Residues P123 to A138 are compositionally biased toward low complexity. Residue S139 is modified to Phosphoserine. Residue Y177 is modified to Phosphotyrosine; by HCK. The span at E185–D198 shows a compositional bias: basic and acidic residues. Disordered stretches follow at residues E185–E247, G286–H392, and N416–A476. Residues S197–T385 are binding to ABL SH2-domain. Positions R199–M208 are enriched in polar residues. A phosphoserine mark is found at S202, S215, S222, and S236. Phosphotyrosine; by FES is present on Y246. 2 stretches are compositionally biased toward low complexity: residues S346–S356 and S369–S382. 3 positions are modified to phosphoserine: S356, S377, and S382. T385 is subject to Phosphothreonine. Over residues D441–D451 the composition is skewed to basic and acidic residues. A phosphoserine mark is found at S459 and S463. An Omega-N-methylarginine modification is found at R471. Residues S473 and S488 each carry the phosphoserine modification. Residues M498–E691 form the DH domain. The residue at position 554 (Y554) is a Phosphotyrosine. Phosphothreonine is present on T641. A Phosphotyrosine modification is found at Y644. A Phosphothreonine modification is found at T693. Positions Q708–K866 constitute a PH domain. The 128-residue stretch at H893–I1020 folds into the C2 domain. S894 bears the Phosphoserine mark. Positions V1054–Y1248 constitute a Rho-GAP domain. S1264 carries the post-translational modification Phosphoserine.

In terms of assembly, homotetramer. Interacts with PDZK1. May interact with CCPG1. Interacts with FES/FPS, ABL1, PIK3R1 and GRB2. Interacts with HCK. Interacts with SH2D5. Interacts with DLG4. Autophosphorylated. Phosphorylated by FES/FPS on tyrosine residues, leading to down-regulation of the BCR kinase activity. Phosphorylation at Tyr-177 by HCK is important for interaction with GRB2.

It localises to the postsynaptic density. The protein resides in the cell projection. The protein localises to the dendritic spine. It is found in the axon. Its subcellular location is the synapse. It carries out the reaction L-seryl-[protein] + ATP = O-phospho-L-seryl-[protein] + ADP + H(+). The catalysed reaction is L-threonyl-[protein] + ATP = O-phospho-L-threonyl-[protein] + ADP + H(+). Functionally, protein with a unique structure having two opposing regulatory activities toward small GTP-binding proteins. The C-terminus is a GTPase-activating protein (GAP) domain which stimulates GTP hydrolysis by RAC1, RAC2 and CDC42. Accelerates the intrinsic rate of GTP hydrolysis of RAC1 or CDC42, leading to down-regulation of the active GTP-bound form. The central Dbl homology (DH) domain functions as guanine nucleotide exchange factor (GEF) that modulates the GTPases CDC42, RHOA and RAC1. Promotes the conversion of CDC42, RHOA and RAC1 from the GDP-bound to the GTP-bound form. The amino terminus contains an intrinsic kinase activity. Functions as an important negative regulator of neuronal RAC1 activity. Regulates macrophage functions such as CSF1-directed motility and phagocytosis through the modulation of RAC1 activity. Plays a major role as a RHOA GEF in keratinocytes being involved in focal adhesion formation and keratinocyte differentiation. The chain is Breakpoint cluster region protein from Homo sapiens (Human).